The chain runs to 509 residues: 2,3-bisphosphoglycerate-independent phosphoglycerate mutase (509 aa).

Asp-11 contacts Mn(2+). Tyr-35 carries the post-translational modification Phosphotyrosine. Ser-61 contacts Mn(2+). Ser-61 acts as the Phosphoserine intermediate in catalysis. Substrate-binding positions include His-122, 152–153 (RD), Arg-184, Arg-190, 260–263 (RPDR), and Lys-335. Asp-402, His-406, Asp-443, His-444, and His-461 together coordinate Mn(2+).

It belongs to the BPG-independent phosphoglycerate mutase family. Monomer. Mn(2+) is required as a cofactor.

The catalysed reaction is (2R)-2-phosphoglycerate = (2R)-3-phosphoglycerate. It participates in carbohydrate degradation; glycolysis; pyruvate from D-glyceraldehyde 3-phosphate: step 3/5. Essential for rapid growth and for sporulation. Catalyzes the interconversion of 2-phosphoglycerate and 3-phosphoglycerate. In Bacillus cereus (strain ATCC 10987 / NRS 248), this protein is 2,3-bisphosphoglycerate-independent phosphoglycerate mutase.